The sequence spans 289 residues: Trimeric intracellular cation channel type B (289 aa).

Residues 1 to 18 are Lumenal-facing; it reads MDVFAFFNLNELAFGLSK. A helical membrane pass occupies residues 19 to 36; the sequence is LPMFPYFDMAHYIISVMS. Residues 37 to 49 are Cytoplasmic-facing; sequence LREQPGALCVSQR. The chain crosses the membrane as a helical span at residues 50-73; it reads SPLACWFSSMLYCFGGAVLSALML. Residues 74–85 are Lumenal-facing; sequence ADAPVAPLSNTT. The chain crosses the membrane as a helical span at residues 86 to 103; sequence NLLLATLMWYLVFYCPLD. The Cytoplasmic portion of the chain corresponds to 104–107; that stretch reads VVYS. A helical transmembrane segment spans residues 108 to 125; that stretch reads LASLLPLRLVLTAMKEVT. Lys122 and Arg126 together coordinate a 1,2-diacyl-sn-glycero-3-phospho-(1D-myo-inositol-4,5-bisphosphate). Residues 126–144 lie on the Lumenal side of the membrane; the sequence is RTWKVLSGVSQAGSKYSDA. The helical transmembrane segment at 145–162 threads the bilayer; sequence LFVMVAVGWAKGAGGGLI. At 163–183 the chain is on the cytoplasmic side; that stretch reads SNFEQLVRGVWKPETNELLKM. Residues 184–201 traverse the membrane as a helical segment; sequence SYPTKVTLLGAVVFSLQQ. At 202–210 the chain is on the lumenal side; sequence CRYLPIQTH. Residues 211–230 form a helical membrane-spanning segment; the sequence is HLTFIYTLFTVTNKTRMMLL. At 231-289 the chain is on the cytoplasmic side; that stretch reads GSSSHPLSSLESFLYKTLFVRPLTDLSAEHTHSKHNGSVPEPTTAQTHTKEAEASKKTN. The tract at residues 260–289 is disordered; the sequence is HTHSKHNGSVPEPTTAQTHTKEAEASKKTN. The segment covering 278–289 has biased composition (basic and acidic residues); that stretch reads HTKEAEASKKTN.

The protein belongs to the TMEM38 family. As to quaternary structure, homotrimer; conformation seems to be controled by binding to diacylglycerol (DAG).

Its subcellular location is the endoplasmic reticulum membrane. The catalysed reaction is K(+)(in) = K(+)(out). Its activity is regulated as follows. Channel activity is activated by increased cytosolic Ca(2+) levels and blocked by luminal high Ca(2+) levels. In terms of biological role, intracellular monovalent cation channel required for maintenance of rapid intracellular calcium release. Acts as a potassium counter-ion channel that functions in synchronization with calcium release from intracellular stores. Activated by increased cytosolic Ca(2+) levels. In Danio rerio (Zebrafish), this protein is Trimeric intracellular cation channel type B (tmem38b).